Here is a 64-residue protein sequence, read N- to C-terminus: Prokaryotic ubiquitin-like protein Pup (64 aa).

Positions 1-11 are enriched in basic and acidic residues; the sequence is MAQEQTKRGGG. The interval 1-36 is disordered; it reads MAQEQTKRGGGGDDDDVTDLGGPAGQERREKLAEDT. The ARC ATPase binding stretch occupies residues 21 to 58; the sequence is GGPAGQERREKLAEDTDDLLDEIDDVLEENAEDFVRAY. Residues 24–52 are a coiled coil; that stretch reads AGQERREKLAEDTDDLLDEIDDVLEENAE. Position 64 is a deamidated glutamine (Gln64). Gln64 participates in a covalent cross-link: Isoglutamyl lysine isopeptide (Gln-Lys) (interchain with K-? in acceptor proteins).

This sequence belongs to the prokaryotic ubiquitin-like protein family. In terms of assembly, strongly interacts with the proteasome-associated ATPase ARC through a hydrophobic interface; the interacting region of Pup lies in its C-terminal half. There is one Pup binding site per ARC hexamer ring. Post-translationally, is modified by deamidation of its C-terminal glutamine to glutamate by the deamidase Dop, a prerequisite to the subsequent pupylation process.

It functions in the pathway protein degradation; proteasomal Pup-dependent pathway. Functionally, protein modifier that is covalently attached to lysine residues of substrate proteins, thereby targeting them for proteasomal degradation. The tagging system is termed pupylation. This Mycobacteroides abscessus (strain ATCC 19977 / DSM 44196 / CCUG 20993 / CIP 104536 / JCM 13569 / NCTC 13031 / TMC 1543 / L948) (Mycobacterium abscessus) protein is Prokaryotic ubiquitin-like protein Pup.